Consider the following 395-residue polypeptide: MGIKHLYQVISENAPDAVKTGEIKNHFGRKVAIDASMSIYSFLIAVRSDGQQLMSDAGETTSHLMGMFYRTLRIVDNGIKPLYVFDGAPPKLKGGELAKRSARKREAHEAHEEAKETGTAEDMEKFSRRTVRVTREHNEECKKLLKLMGVPYIDAPTEAEAQCAVLARAGKVYAAASEDMDTLCFEAPILLRHLTFSEQRKEPIQEIHLDKALEGLGMDRKQFIDLCILLGCDYLEPIPKVGPNTALKLIREHGSLEKVVEAIESDPKKKYVIPDDWPYKEARELFFNPDVRKADDPQCDFKWESPDVEGLIQFLVTEKGFSEDRVRNGAARLAKNLKSAQQSRLEGFFKPVTKTEAEKASLKRKHDEKIEEQKKRKKEEAKAKKEAKARPRGAV.

The segment at 1–104 (MGIKHLYQVI…GELAKRSARK (104 aa)) is N-domain. Aspartate 34 contributes to the Mg(2+) binding site. Arginine 47 and arginine 70 together coordinate DNA. Aspartate 86 serves as a coordination point for Mg(2+). The segment at 99–126 (KRSARKREAHEAHEEAKETGTAEDMEKF) is disordered. The tract at residues 122–253 (DMEKFSRRTV…NTALKLIREH (132 aa)) is I-domain. Mg(2+) is bound by residues glutamate 158, glutamate 160, aspartate 179, and aspartate 181. DNA is bound at residue glutamate 158. DNA is bound by residues glycine 231 and aspartate 233. Aspartate 233 contacts Mg(2+). The tract at residues 341-349 (QQSRLEGFF) is interaction with PCNA. The span at 356 to 389 (EAEKASLKRKHDEKIEEQKKRKKEEAKAKKEAKA) shows a compositional bias: basic and acidic residues. The interval 356-395 (EAEKASLKRKHDEKIEEQKKRKKEEAKAKKEAKARPRGAV) is disordered.

This sequence belongs to the XPG/RAD2 endonuclease family. FEN1 subfamily. As to quaternary structure, interacts with PCNA. Three molecules of fen1 bind to one PCNA trimer with each molecule binding to one PCNA monomer. PCNA stimulates the nuclease activity without altering cleavage specificity. The cofactor is Mg(2+). Post-translationally, phosphorylated. Phosphorylation upon DNA damage induces relocalization to the nuclear plasma.

It is found in the nucleus. Its subcellular location is the nucleolus. It localises to the nucleoplasm. The protein localises to the mitochondrion. Its function is as follows. Structure-specific nuclease with 5'-flap endonuclease and 5'-3' exonuclease activities involved in DNA replication and repair. During DNA replication, cleaves the 5'-overhanging flap structure that is generated by displacement synthesis when DNA polymerase encounters the 5'-end of a downstream Okazaki fragment. It enters the flap from the 5'-end and then tracks to cleave the flap base, leaving a nick for ligation. Also involved in the long patch base excision repair (LP-BER) pathway, by cleaving within the apurinic/apyrimidinic (AP) site-terminated flap. Acts as a genome stabilization factor that prevents flaps from equilibrating into structures that lead to duplications and deletions. Also possesses 5'-3' exonuclease activity on nicked or gapped double-stranded DNA, and exhibits RNase H activity. Also involved in replication and repair of rDNA and in repairing mitochondrial DNA. In Talaromyces stipitatus (strain ATCC 10500 / CBS 375.48 / QM 6759 / NRRL 1006) (Penicillium stipitatum), this protein is Flap endonuclease 1 (fen1).